Reading from the N-terminus, the 251-residue chain is Regulator of G-protein signaling 7-binding protein B (251 aa).

The disordered stretch occupies residues 1–43 (MCSAPNGRKNRPRSAANIFQIGKSSVRDPERRESTESARRAQR). Residues 25 to 43 (SVRDPERRESTESARRAQR) are compositionally biased toward basic and acidic residues. 2 S-palmitoyl cysteine lipidation sites follow: Cys-246 and Cys-247.

This sequence belongs to the RGS7BP/RGS9BP family. Post-translationally, palmitoylated. Undergoes rapid palmitoylation turnover. Palmitoylation regulates the cell membrane and nuclear shuttling and the regulation of GPCR signaling. Upon depalmitoylation, it is targeted from the plasma membrane into the nucleus. GPCR signaling inhibits depalmitoylation and promotes localization to the plasma membrane.

It localises to the nucleus. Its subcellular location is the cytoplasm. It is found in the cell membrane. Its function is as follows. Regulator of G protein-coupled receptor (GPCR) signaling. Regulatory subunit of the R7-Gbeta5 complexes that acts by controlling the subcellular location of the R7-Gbeta5 complexes. When palmitoylated, it targets the R7-Gbeta5 complexes to the plasma membrane, leading to inhibit G protein alpha subunits. When it is unpalmitoylated, the R7-Gbeta5 complexes undergo a nuclear/cytoplasmic shuttling. The protein is Regulator of G-protein signaling 7-binding protein B (rgs7bpb) of Danio rerio (Zebrafish).